Reading from the N-terminus, the 372-residue chain is DNA damage-repair/toleration protein DRT100 (372 aa).

Positions 1-26 (MRKLLASPFSSLLAVVFISVISVVRC) are cleaved as a signal peptide. LRR repeat units lie at residues 136–158 (SLRI…IGKL), 160–183 (KLAV…TSLI), 184–205 (ELKH…DFGS), 208–230 (MLSR…ISGM), 232–254 (RLAD…MGNM), 256–277 (VLSL…SLLS), 280–302 (GLDV…FGSK), 304–326 (YLVS…LSSA), and 328–350 (FVGH…FPFD).

This protein is able to complement bacterial recA mutations, but its native function in the plant is not known. The protein is DNA damage-repair/toleration protein DRT100 (DRT100) of Arabidopsis thaliana (Mouse-ear cress).